A 537-amino-acid polypeptide reads, in one-letter code: Beta-1-syntrophin (537 aa).

Position 2 is an N-acetylalanine (alanine 2). PH domains lie at 18 to 297 (RAQR…SNAG) and 321 to 432 (EIRH…QGCH). 3 positions are modified to phosphoserine: serine 86, serine 125, and serine 204. In terms of domain architecture, PDZ spans 111-194 (GVKVLKQELG…EVLLEVKYMR (84 aa)). Residues 204–233 (SPVSEIGWETPPPESPRLGGGSAEPLSSQS) form a disordered region. A Phosphothreonine modification is found at threonine 213. Serine 218, serine 225, serine 231, serine 235, and serine 388 each carry phosphoserine. An SU domain is found at 481 to 537 (PYEKLKMSSDDGIRMLYLDFGGKEGEIQLDLHSCPKPIVFIIHSFLSAKITRLGLVA). The tract at residues 517 to 537 (PIVFIIHSFLSAKITRLGLVA) is calmodulin-binding.

Belongs to the syntrophin family. In terms of assembly, monomer and homodimer. Interacts with the viral HTLV-1 TAX protein and other members of the syntrophin family: SNTA1 and SNTB2. Interacts with the dystrophin protein DMD and related proteins DTNA and UTRN and with the sodium channel proteins SCN4A and SCN5A. Interacts with DTNB. Phosphorylated by CaM-kinase II. Ubiquitous. Expressed at high levels in the liver.

The protein resides in the cell membrane. It is found in the sarcolemma. Its subcellular location is the cell junction. It localises to the cytoplasm. The protein localises to the cytoskeleton. In terms of biological role, adapter protein that binds to and probably organizes the subcellular localization of a variety of membrane proteins. May link various receptors to the actin cytoskeleton and the dystrophin glycoprotein complex. The sequence is that of Beta-1-syntrophin (Sntb1) from Mus musculus (Mouse).